Consider the following 305-residue polypeptide: Tyrosine recombinase XerD (305 aa).

Residues 2 to 87 form the Core-binding (CB) domain; that stretch reads SQGEAWADAF…AVRQFYRFVL (86 aa). The Tyr recombinase domain occupies 108–295; the sequence is PLPKVLERDE…AGEHLAHIVQ (188 aa). Residues Arg149, Lys173, His247, Arg250, and His273 contribute to the active site. Tyr282 acts as the O-(3'-phospho-DNA)-tyrosine intermediate in catalysis.

This sequence belongs to the 'phage' integrase family. XerD subfamily. In terms of assembly, forms a cyclic heterotetrameric complex composed of two molecules of XerC and two molecules of XerD.

The protein localises to the cytoplasm. Site-specific tyrosine recombinase, which acts by catalyzing the cutting and rejoining of the recombining DNA molecules. The XerC-XerD complex is essential to convert dimers of the bacterial chromosome into monomers to permit their segregation at cell division. It also contributes to the segregational stability of plasmids. This is Tyrosine recombinase XerD from Caulobacter vibrioides (strain ATCC 19089 / CIP 103742 / CB 15) (Caulobacter crescentus).